A 385-amino-acid chain; its full sequence is Flap endonuclease 1 (385 aa).

Residues 1 to 105 (MGIKGLNAII…HELSKRSARR (105 aa)) are N-domain. Position 34 (D34) interacts with Mg(2+). R47 and R71 together coordinate DNA. Positions 87, 156, 158, 177, and 179 each coordinate Mg(2+). An I-domain region spans residues 120-251 (EKLKHERRLV…VTALKLIKEH (132 aa)). E156 is a binding site for DNA. Residues G229 and D231 each coordinate DNA. Mg(2+) is bound at residue D231. The interaction with PCNA stretch occupies residues 338–346 (VQGRLDGFF). Positions 356 to 370 (LAAANAKAKSTKAGK) are enriched in low complexity. A disordered region spans residues 356–385 (LAAANAKAKSTKAGKQATKGKVGKPGRPRK). A compositionally biased stretch (basic residues) spans 376 to 385 (KVGKPGRPRK).

Belongs to the XPG/RAD2 endonuclease family. FEN1 subfamily. As to quaternary structure, interacts with PCNA. Three molecules of FEN1 bind to one PCNA trimer with each molecule binding to one PCNA monomer. PCNA stimulates the nuclease activity without altering cleavage specificity. Mg(2+) is required as a cofactor. Phosphorylated. Phosphorylation upon DNA damage induces relocalization to the nuclear plasma.

It is found in the nucleus. The protein localises to the nucleolus. Its subcellular location is the nucleoplasm. The protein resides in the mitochondrion. Structure-specific nuclease with 5'-flap endonuclease and 5'-3' exonuclease activities involved in DNA replication and repair. During DNA replication, cleaves the 5'-overhanging flap structure that is generated by displacement synthesis when DNA polymerase encounters the 5'-end of a downstream Okazaki fragment. It enters the flap from the 5'-end and then tracks to cleave the flap base, leaving a nick for ligation. Also involved in the long patch base excision repair (LP-BER) pathway, by cleaving within the apurinic/apyrimidinic (AP) site-terminated flap. Acts as a genome stabilization factor that prevents flaps from equilibrating into structures that lead to duplications and deletions. Also possesses 5'-3' exonuclease activity on nicked or gapped double-stranded DNA, and exhibits RNase H activity. Also involved in replication and repair of rDNA and in repairing mitochondrial DNA. This is Flap endonuclease 1 from Lachancea thermotolerans (strain ATCC 56472 / CBS 6340 / NRRL Y-8284) (Yeast).